The following is a 367-amino-acid chain: Outer membrane protein P2 (367 aa).

The first 20 residues, 1 to 20, serve as a signal peptide directing secretion; that stretch reads MKKTLAALIVGAFAASAANA.

The protein belongs to the Gram-negative porin family. Homotrimer.

It is found in the cell outer membrane. In terms of biological role, forms pores that allow passive diffusion of small molecules across the outer membrane. The polypeptide is Outer membrane protein P2 (ompP2) (Haemophilus influenzae).